A 60-amino-acid chain; its full sequence is Large ribosomal subunit protein uL30 (60 aa).

The protein belongs to the universal ribosomal protein uL30 family. Part of the 50S ribosomal subunit.

The polypeptide is Large ribosomal subunit protein uL30 (Streptococcus pneumoniae (strain Hungary19A-6)).